We begin with the raw amino-acid sequence, 868 residues long: LPS-assembly protein LptD (868 aa).

The N-terminal stretch at Met-1–Ala-24 is a signal peptide.

Belongs to the LptD family. In terms of assembly, component of the lipopolysaccharide transport and assembly complex. Interacts with LptE and LptA.

Its subcellular location is the cell outer membrane. Its function is as follows. Together with LptE, is involved in the assembly of lipopolysaccharide (LPS) at the surface of the outer membrane. This chain is LPS-assembly protein LptD, found in Francisella tularensis subsp. novicida (strain U112).